A 414-amino-acid polypeptide reads, in one-letter code: Isocitrate dehydrogenase [NADP] cytoplasmic (414 aa).

S2 is modified (N-acetylserine). Residue Y42 is modified to Phosphotyrosine. 75–77 (TIT) contacts NADP(+). T77 is a binding site for substrate. K81 is modified (N6-acetyllysine). R82 provides a ligand contact to NADP(+). Substrate contacts are provided by residues 94 to 100 (SPNGTIR) and R109. The residue at position 126 (K126) is an N6-succinyllysine. R132 and K212 together coordinate substrate. 3 positions are modified to N6-acetyllysine: K224, K233, and K243. Mn(2+) is bound at residue D252. K260 provides a ligand contact to NADP(+). Mn(2+) is bound by residues D275 and D279. An NADP(+)-binding site is contributed by 310 to 315 (GTVTRH). An N6-acetyllysine modification is found at K321. N328 serves as a coordination point for NADP(+). S389 carries the phosphoserine modification. K400 is modified (N6-succinyllysine).

This sequence belongs to the isocitrate and isopropylmalate dehydrogenases family. In terms of assembly, homodimer. It depends on Mg(2+) as a cofactor. Mn(2+) serves as cofactor. Acetylation at Lys-374 dramatically reduces catalytic activity.

Its subcellular location is the cytoplasm. It is found in the cytosol. The catalysed reaction is D-threo-isocitrate + NADP(+) = 2-oxoglutarate + CO2 + NADPH. In terms of biological role, catalyzes the NADP(+)-dependent oxidative decarboxylation of isocitrate (D-threo-isocitrate) to 2-ketoglutarate (2-oxoglutarate), which is required by other enzymes such as the phytanoyl-CoA dioxygenase. Plays a critical role in the generation of NADPH, an important cofactor in many biosynthesis pathways. May act as a corneal epithelial crystallin and may be involved in maintaining corneal epithelial transparency. The polypeptide is Isocitrate dehydrogenase [NADP] cytoplasmic (IDH1) (Pongo abelii (Sumatran orangutan)).